A 120-amino-acid polypeptide reads, in one-letter code: Large ribosomal subunit protein uL18 (120 aa).

It belongs to the universal ribosomal protein uL18 family. Part of the 50S ribosomal subunit; part of the 5S rRNA/L5/L18/L25 subcomplex. Contacts the 5S and 23S rRNAs.

In terms of biological role, this is one of the proteins that bind and probably mediate the attachment of the 5S RNA into the large ribosomal subunit, where it forms part of the central protuberance. The protein is Large ribosomal subunit protein uL18 of Macrococcus caseolyticus (strain JCSC5402) (Macrococcoides caseolyticum).